A 484-amino-acid chain; its full sequence is Glycogen synthase 2 (484 aa).

Lys-15 provides a ligand contact to ADP-alpha-D-glucose.

This sequence belongs to the glycosyltransferase 1 family. Bacterial/plant glycogen synthase subfamily.

It catalyses the reaction [(1-&gt;4)-alpha-D-glucosyl](n) + ADP-alpha-D-glucose = [(1-&gt;4)-alpha-D-glucosyl](n+1) + ADP + H(+). Its pathway is glycan biosynthesis; glycogen biosynthesis. Functionally, synthesizes alpha-1,4-glucan chains using ADP-glucose. The protein is Glycogen synthase 2 of Geobacter metallireducens (strain ATCC 53774 / DSM 7210 / GS-15).